We begin with the raw amino-acid sequence, 354 residues long: Ribosomal RNA large subunit methyltransferase M (354 aa).

S-adenosyl-L-methionine-binding positions include serine 183, 216-219, aspartate 235, aspartate 255, and aspartate 271; that span reads SPGG. The active-site Proton acceptor is lysine 300.

Belongs to the class I-like SAM-binding methyltransferase superfamily. RNA methyltransferase RlmE family. RlmM subfamily. In terms of assembly, monomer.

The protein localises to the cytoplasm. It catalyses the reaction cytidine(2498) in 23S rRNA + S-adenosyl-L-methionine = 2'-O-methylcytidine(2498) in 23S rRNA + S-adenosyl-L-homocysteine + H(+). Its function is as follows. Catalyzes the 2'-O-methylation at nucleotide C2498 in 23S rRNA. This chain is Ribosomal RNA large subunit methyltransferase M, found in Pseudomonas putida (strain ATCC 700007 / DSM 6899 / JCM 31910 / BCRC 17059 / LMG 24140 / F1).